Here is a 132-residue protein sequence, read N- to C-terminus: Hemoglobin heart muscle subunit alpha-type (132 aa).

Residues 1 to 132 (GLSDSEKSAV…GEVGAILTSS (132 aa)) form the Globin domain. Residues His58 and His83 each contribute to the heme b site.

It belongs to the globin family. Monomer.

Functionally, this hemoglobin may replace myocardial myoglobin in this amphibian species. This chain is Hemoglobin heart muscle subunit alpha-type, found in Aquarana catesbeiana (American bullfrog).